The primary structure comprises 101 residues: Large ribosomal subunit protein eL36 (101 aa).

Disordered stretches follow at residues 1–31 (MGEI…GFLS) and 75–101 (GTHM…SKGE).

Belongs to the eukaryotic ribosomal protein eL36 family.

The protein is Large ribosomal subunit protein eL36 (RL36) of Ulva compressa (Green alga).